A 123-amino-acid polypeptide reads, in one-letter code: Large ribosomal subunit protein bL12 (123 aa).

The segment at 96–123 (NVKEGVSKEEAEGLKKSLEEAGATVELK) is disordered. Basic and acidic residues predominate over residues 100–114 (GVSKEEAEGLKKSLE).

Belongs to the bacterial ribosomal protein bL12 family. In terms of assembly, homodimer. Part of the ribosomal stalk of the 50S ribosomal subunit. Forms a multimeric L10(L12)X complex, where L10 forms an elongated spine to which 2 to 4 L12 dimers bind in a sequential fashion. Binds GTP-bound translation factors.

Forms part of the ribosomal stalk which helps the ribosome interact with GTP-bound translation factors. Is thus essential for accurate translation. This is Large ribosomal subunit protein bL12 from Flavobacterium johnsoniae (strain ATCC 17061 / DSM 2064 / JCM 8514 / BCRC 14874 / CCUG 350202 / NBRC 14942 / NCIMB 11054 / UW101) (Cytophaga johnsonae).